Consider the following 270-residue polypeptide: Phosphatidylglycerol--prolipoprotein diacylglyceryl transferase (270 aa).

A run of 4 helical transmembrane segments spans residues 18 to 38, 55 to 75, 89 to 109, and 115 to 135; these read IAVH…LWLA, LVLF…VIFQ, IWNG…TGII, and GLSF…GQAI. Position 137 (Arg-137) interacts with a 1,2-diacyl-sn-glycero-3-phospho-(1'-sn-glycerol). 3 consecutive transmembrane segments (helical) span residues 177 to 197, 205 to 225, and 236 to 256; these read QPTF…LLLL, GELF…IEGL, and LRIA…LIAY.

Belongs to the Lgt family.

The protein resides in the cell membrane. The catalysed reaction is L-cysteinyl-[prolipoprotein] + a 1,2-diacyl-sn-glycero-3-phospho-(1'-sn-glycerol) = an S-1,2-diacyl-sn-glyceryl-L-cysteinyl-[prolipoprotein] + sn-glycerol 1-phosphate + H(+). The protein operates within protein modification; lipoprotein biosynthesis (diacylglyceryl transfer). In terms of biological role, catalyzes the transfer of the diacylglyceryl group from phosphatidylglycerol to the sulfhydryl group of the N-terminal cysteine of a prolipoprotein, the first step in the formation of mature lipoproteins. The chain is Phosphatidylglycerol--prolipoprotein diacylglyceryl transferase from Bacillus licheniformis (strain ATCC 14580 / DSM 13 / JCM 2505 / CCUG 7422 / NBRC 12200 / NCIMB 9375 / NCTC 10341 / NRRL NRS-1264 / Gibson 46).